Here is a 156-residue protein sequence, read N- to C-terminus: uncharacterized protein (156 aa).

It is found in the mitochondrion. This is an uncharacterized protein from Paramecium tetraurelia.